Reading from the N-terminus, the 103-residue chain is Omega toxin Ap5 (103 aa).

A signal peptide spans 1–22 (MNTIQVILFAVVLVLTVTVGQA). A propeptide spanning residues 23 to 57 (DEDSAETSLLRKLEEAEASMFGQYLEESKNSREKR) is cleaved from the precursor. Disulfide bonds link C58–C73, C65–C78, and C72–C93.

Belongs to the neurotoxin 14 (magi-1) family. 08 (Ltx-4) subfamily. In terms of tissue distribution, expressed by the venom duct.

It localises to the secreted. In terms of biological role, shows a weak inhibition on the voltage-gated calcium channel Cav2.1/CACNA1A and some voltage-gated sodium channels (with 1 uM toxin tested: 22.08% inhibition on Cav2.1/CACNA1A, 6.6% on Nav1.1/SCN1A, 4.2% on Nav1.5, and 16% on Nav1.7). Its function is as follows. Shows a weak inhibition on the voltage-gated calcium channel Cav2.1/CACNA1A (28.06% at 1 uM). This is Omega toxin Ap5 from Acanthoscurria paulensis (Brazilian giant black tarantula spider).